The chain runs to 372 residues: MKYDLIIIGSGSVGAAAGYYATRAGLNVLMTDAHMPPHQHGSHHGDTRLIRHAYGEGEKYVPLVLRAQTLWDELSRHNEDDPIFVRSGVINLGPADSAFLANVAHSAEQWQLNVEKLDAQGIMARWPEIRVPDNYIGLFETDSGFLRSELAIKTWIQLAKEAGCAQLFNCPVTAIRHDDDGVTIETVDGEYQAKKAIVCAGTWVKDLLPEQPVQPVRKVFAWYQADGRYSVKNKFPAFTGELPNGDQYYGFPAENDALKIGKHNGGQVIHSADERVPFAEVVSDGSEAFPFLRNVLPGIGCCLYGAACTYDNSPDEDFIIDTLPGHDNTLLITGLSGHGFKFASVLGEIAADFAQDKKSDFDLTPFRLSRFQ.

Residue 4–34 coordinates FAD; it reads DLIIIGSGSVGAAAGYYATRAGLNVLMTDAH. Residue Cys308 is modified to S-8alpha-FAD cysteine.

It belongs to the MSOX/MTOX family. MTOX subfamily. In terms of assembly, monomer. The cofactor is FAD.

It carries out the reaction N(alpha)-methyl-L-tryptophan + O2 + H2O = L-tryptophan + formaldehyde + H2O2. In terms of biological role, catalyzes the oxidative demethylation of N-methyl-L-tryptophan. The polypeptide is N-methyl-L-tryptophan oxidase (Shigella sonnei (strain Ss046)).